Here is a 153-residue protein sequence, read N- to C-terminus: Arginine repressor (153 aa).

Belongs to the ArgR family.

The protein localises to the cytoplasm. It participates in amino-acid biosynthesis; L-arginine biosynthesis [regulation]. Functionally, regulates arginine biosynthesis genes. In Haemophilus ducreyi (strain 35000HP / ATCC 700724), this protein is Arginine repressor.